The sequence spans 212 residues: Putative 3-methyladenine DNA glycosylase (212 aa).

Belongs to the DNA glycosylase MPG family.

This is Putative 3-methyladenine DNA glycosylase from Nocardia farcinica (strain IFM 10152).